The sequence spans 734 residues: Photosystem I P700 chlorophyll a apoprotein A2 (734 aa).

8 helical membrane passes run 46–69 (IFAS…FHVA), 135–158 (LYTG…LHLQ), 175–199 (LNHH…HVAI), 273–291 (MAHH…GHMY), 330–353 (LHFQ…QHMY), 369–395 (AALY…IFFI), 417–439 (AIIS…LYVH), and 517–535 (FLVH…LILV). [4Fe-4S] cluster contacts are provided by C559 and C568. Helical transmembrane passes span 575–596 (AFYL…YWHW) and 643–665 (LSVW…MFLI). Chlorophyll a-binding residues include H654, M662, and Y670. W671 provides a ligand contact to phylloquinone. Residues 707–727 (LVGLAHFSVGYIFTYAAFLIA) form a helical membrane-spanning segment.

It belongs to the PsaA/PsaB family. The PsaA/B heterodimer binds the P700 chlorophyll special pair and subsequent electron acceptors. PSI consists of a core antenna complex that captures photons, and an electron transfer chain that converts photonic excitation into a charge separation. The eukaryotic PSI reaction center is composed of at least 11 subunits. The cofactor is P700 is a chlorophyll a/chlorophyll a' dimer, A0 is one or more chlorophyll a, A1 is one or both phylloquinones and FX is a shared 4Fe-4S iron-sulfur center..

It localises to the plastid. The protein resides in the chloroplast thylakoid membrane. It carries out the reaction reduced [plastocyanin] + hnu + oxidized [2Fe-2S]-[ferredoxin] = oxidized [plastocyanin] + reduced [2Fe-2S]-[ferredoxin]. In terms of biological role, psaA and PsaB bind P700, the primary electron donor of photosystem I (PSI), as well as the electron acceptors A0, A1 and FX. PSI is a plastocyanin-ferredoxin oxidoreductase, converting photonic excitation into a charge separation, which transfers an electron from the donor P700 chlorophyll pair to the spectroscopically characterized acceptors A0, A1, FX, FA and FB in turn. Oxidized P700 is reduced on the lumenal side of the thylakoid membrane by plastocyanin. In Cucumis sativus (Cucumber), this protein is Photosystem I P700 chlorophyll a apoprotein A2.